Consider the following 333-residue polypeptide: L-lactate dehydrogenase B chain (333 aa).

Residues 29–57 (GQVG…IEDK) and Arg99 each bind NAD(+). Substrate contacts are provided by Arg106, Asn138, and Arg169. Position 138 (Asn138) interacts with NAD(+). The active-site Proton acceptor is His193. Thr248 lines the substrate pocket.

Belongs to the LDH/MDH superfamily. LDH family. In terms of assembly, homotetramer.

The protein localises to the cytoplasm. It catalyses the reaction (S)-lactate + NAD(+) = pyruvate + NADH + H(+). It functions in the pathway fermentation; pyruvate fermentation to lactate; (S)-lactate from pyruvate: step 1/1. In terms of biological role, interconverts simultaneously and stereospecifically pyruvate and lactate with concomitant interconversion of NADH and NAD(+). The polypeptide is L-lactate dehydrogenase B chain (ldhb) (Anguilla rostrata (American eel)).